The sequence spans 160 residues: Serine-protein kinase RsbW (160 aa).

It belongs to the anti-sigma-factor family.

The enzyme catalyses L-seryl-[protein] + ATP = O-phospho-L-seryl-[protein] + ADP + H(+). The catalysed reaction is L-threonyl-[protein] + ATP = O-phospho-L-threonyl-[protein] + ADP + H(+). Its function is as follows. Negative regulator of sigma-B activity. Phosphorylates and inactivates its specific antagonist protein, RsbV. Upon phosphorylation of RsbV, RsbW is released and binds to sigma-B, thereby blocking its ability to form an RNA polymerase holoenzyme (E-sigma-B). This chain is Serine-protein kinase RsbW, found in Bacillus anthracis (strain A0248).